Here is a 2715-residue protein sequence, read N- to C-terminus: Teneurin-3 (2715 aa).

2 disordered regions span residues 1-38 (MDVK…VPTQ) and 142-223 (GRSS…AALP). The Teneurin N-terminal domain maps to 1-309 (MDVKERRPYC…KSSKYCSWRC (309 aa)). Over 1–310 (MDVKERRPYC…SSKYCSWRCT (310 aa)) the chain is Cytoplasmic. Low complexity predominate over residues 142–153 (GRSSCLSSRSNS). A compositionally biased stretch (basic and acidic residues) spans 159–168 (DTEHENRSDS). A compositionally biased stretch (polar residues) spans 171–182 (EQPSNNPGQPTL). Residues 201-213 (TSLNRNSLTNRRN) are compositionally biased toward low complexity. Residues 311-331 (ALCAVGVSVLLAILLSYFIAM) traverse the membrane as a helical segment. Over 332–2715 (HLFGLNWHLQ…FLRQSEIGKR (2384 aa)) the chain is Extracellular. Residues Asn-345, Asn-380, and Asn-419 are each glycosylated (N-linked (GlcNAc...) asparagine). EGF-like domains follow at residues 514–545 (SVVE…PDCS), 546–576 (RAAC…TECD), 578–610 (PTTQ…ENCE), 611–642 (EADC…SNCE), 644–677 (LKTM…PDCS), 678–709 (NEIC…ACNQ), 710–739 (RACH…EHCT), and 740–783 (IAHY…AGCD). Disulfide bonds link Cys-518/Cys-528, Cys-522/Cys-533, Cys-535/Cys-544, Cys-553/Cys-564, Cys-566/Cys-575, Cys-582/Cys-593, Cys-587/Cys-598, Cys-600/Cys-609, Cys-614/Cys-625, Cys-619/Cys-630, Cys-632/Cys-641, Cys-652/Cys-665, Cys-667/Cys-676, Cys-681/Cys-691, Cys-685/Cys-696, Cys-698/Cys-707, Cys-712/Cys-722, Cys-716/Cys-727, Cys-729/Cys-738, Cys-752/Cys-762, Cys-756/Cys-771, and Cys-773/Cys-782. N-linked (GlcNAc...) asparagine glycosylation is present at Asn-670. Asn-869 and Asn-892 each carry an N-linked (GlcNAc...) asparagine glycan. Residues 1181-1209 (LLAPVALACGIDGSLYVGDFNYVRRIFPS) form an NHL 1 repeat. An N-linked (GlcNAc...) asparagine glycan is attached at Asn-1211. NHL repeat units lie at residues 1216 to 1260 (LELR…PKSL), 1286 to 1330 (ARCG…NGII), 1347 to 1387 (CDTS…ITEN), 1418 to 1445 (LESA…INRI), and 1474 to 1517 (CYQS…VSKN). The YD 1 repeat unit spans residues 1527–1546 (YEVASPTDQELYIFDINGTH). N-linked (GlcNAc...) asparagine glycans are attached at residues Asn-1543 and Asn-1560. YD repeat units lie at residues 1563–1583 (YSND…LRIR), 1626–1645 (YHGN…WTTF), and 1646–1668 (FDYD…TNLH). 4 N-linked (GlcNAc...) asparagine glycosylation sites follow: Asn-1656, Asn-1693, Asn-1751, and Asn-1836. YD repeat units lie at residues 1839–1858 (YSST…EKVD), 1880–1898 (YLEK…YIFE), 1899–1919 (YDMW…HTMQ), 1926–1943 (YYRN…IITD), 1944–1965 (YNEE…VLFK), 1966–1983 (YRRQ…TRVS), 1986–2006 (YDET…FICT), 2009–2029 (YRQI…DGMV), 2037–2056 (YDNS…TPLP), 2062–2079 (FDDI…GVIY), 2080–2106 (YDIN…IKEI), 2108–2121 (YEIF…ITIQ), 2122–2145 (YDNM…TKYA), 2148–2168 (YDVD…WRYN), 2169–2189 (YDLN…LTPL), 2191–2211 (YDLR…DEDG), 2223–2243 (YSSK…TVIY), and 2245–2265 (YDGL…LQFF). Residue Asn-1937 is glycosylated (N-linked (GlcNAc...) asparagine). N-linked (GlcNAc...) asparagine glycosylation occurs at Asn-2140. Asn-2280 carries N-linked (GlcNAc...) asparagine glycosylation. A YD 23 repeat occupies 2291 to 2332 (YDLQGHLFAMEISSGDEFYIASDNTGTPLAVFSSNGLMLKQT). N-linked (GlcNAc...) asparagine glycosylation is present at Asn-2592.

Belongs to the tenascin family. Teneurin subfamily. Homodimer; disulfide-linked; to mediate homophilic cell adhesion. Most isoforms (isoform-type A and type-B) can mediate homophilic interaction. Heterodimer with either TENM1 or TENM2. May also form heterodimer with TENM4. Isoform A0B0: Does not form homodimer to mediate homophilic cell adhesion. Isoform A0B0: Heterodimer with ADGRL3. As to expression, in brain, expressed in highly specific regions of the postnatal brain: expressed in restricted domains of the developing hippocampal region, including proximal CA1, distal subiculum, and medial entorhinal cortex (at protein level). Expression matches with topographic connectivity between entorhinal cortex, CA1, and subiculum (at protein level). Also specifically expressed in subregions of the presubiculum, parasubiculum, medial mammillary nucleus and anteroventral thalamic nucleus that are topographically connected with subiculum or entorhinal cortex (at protein level). Expressed in neurons of the developing visual pathway (at protein level). Expressed in the dorsal and ventral lateral geniculate nucleus (dLGN and vLGN) and optic tract at birth. Expressed in ipsilateral retinal axons of terminal zones (TZs) in the developing superior colliculus (SC) throughout the first postnatal week. Expressed in the layer V of the visual caudal cortex. Expressed in the femoral and mandibular condylar cartilages. Strongly expressed in fibrous and proliferating chondrocytes. Poorly expressed in mature chondrocytes. Not expressed in hypertrophic chondrocytes.

The protein resides in the cell membrane. The protein localises to the cell projection. It is found in the axon. Involved in neural development by regulating the establishment of proper connectivity within the nervous system. Acts in both pre- and postsynaptic neurons in the hippocampus to control the assembly of a precise topographic projection: required in both CA1 and subicular neurons for the precise targeting of proximal CA1 axons to distal subiculum, probably by promoting homophilic cell adhesion. Promotes homophilic adhesion in a splicing isoform-dependent manner: most isoforms (isoform-type A and type-B) can mediate homophilic interaction. Promotes axon guidance. Required for proper dendrite morphogenesis and axon targeting in the vertebrate visual system, thereby playing a key role in the development of the visual pathway. Regulates the formation in ipsilateral retinal mapping to both the dorsal lateral geniculate nucleus (dLGN) and the superior colliculus (SC). May also be involved in the differentiation of the fibroblast-like cells in the superficial layer of mandibular condylar cartilage into chondrocytes. This Mus musculus (Mouse) protein is Teneurin-3.